The chain runs to 338 residues: Phosphate acyltransferase (338 aa).

The protein belongs to the PlsX family. Homodimer. Probably interacts with PlsY.

It is found in the cytoplasm. It catalyses the reaction a fatty acyl-[ACP] + phosphate = an acyl phosphate + holo-[ACP]. It functions in the pathway lipid metabolism; phospholipid metabolism. In terms of biological role, catalyzes the reversible formation of acyl-phosphate (acyl-PO(4)) from acyl-[acyl-carrier-protein] (acyl-ACP). This enzyme utilizes acyl-ACP as fatty acyl donor, but not acyl-CoA. This is Phosphate acyltransferase from Mannheimia succiniciproducens (strain KCTC 0769BP / MBEL55E).